The primary structure comprises 428 residues: Putative F-box protein At3g22421 (428 aa).

The F-box domain occupies 4–50 (TTTISHLPTELLDEIISRVPLKSTRAVRLTCKNWDSLFKNRSFMKEE).

This is Putative F-box protein At3g22421 from Arabidopsis thaliana (Mouse-ear cress).